Consider the following 253-residue polypeptide: Polyprenal reductase (253 aa).

The next 4 membrane-spanning stretches (helical) occupy residues 18 to 38, 78 to 98, 123 to 143, and 200 to 220; these read LSFF…PEFL, FLSL…IIFG, HYLV…ISLY, and IIYS…VWVI.

Belongs to the steroid 5-alpha reductase family. Polyprenal reductase subfamily.

The protein resides in the endoplasmic reticulum membrane. It carries out the reaction a di-trans,poly-cis-dolichal + NADP(+) = a di-trans,poly-cis-polyprenal + NADPH + H(+). Its pathway is protein modification; protein glycosylation. Functionally, plays a key role in early steps of protein N-linked glycosylation by being involved in the conversion of polyprenol into dolichol. Acts as a polyprenal reductase that mediates the reduction of polyprenal into dolichal in a NADP-dependent mechanism. Dolichols are required for the synthesis of dolichol-linked monosaccharides and the oligosaccharide precursor used for N-glycosylation. This Saccharomyces cerevisiae (strain ATCC 204508 / S288c) (Baker's yeast) protein is Polyprenal reductase.